A 184-amino-acid polypeptide reads, in one-letter code: Peptidoglycan-recognition protein SC2 (184 aa).

Residues 1 to 20 (MANKALILLAVLFCAQAVLG) form the signal peptide. Residues 45 to 169 (SYAVIHHTAG…RQVGSTECPG (125 aa)) form the N-acetylmuramoyl-L-alanine amidase domain. Residue His50 coordinates Zn(2+). Residues Cys57 and Cys63 are joined by a disulfide bond. Zn(2+)-binding residues include His159 and Cys167.

It belongs to the N-acetylmuramoyl-L-alanine amidase 2 family. Zn(2+) serves as cofactor. As to expression, constitutively expressed at high level in gut, in addition to the induced expression in fat body.

The protein resides in the secreted. The enzyme catalyses Hydrolyzes the link between N-acetylmuramoyl residues and L-amino acid residues in certain cell-wall glycopeptides.. Functionally, N-acetylmuramyl-L-alanine amidase involved in innate immunity by degrading bacterial peptidoglycans (PGN). Probably plays a scavenger role by digesting biologically active PGN into biologically inactive fragments. Has no direct bacteriolytic activity. This is Peptidoglycan-recognition protein SC2 (PGRP-SC2) from Drosophila melanogaster (Fruit fly).